A 188-amino-acid chain; its full sequence is UPF0301 protein MCA2336 2 (188 aa).

The protein belongs to the UPF0301 (AlgH) family.

In Methylococcus capsulatus (strain ATCC 33009 / NCIMB 11132 / Bath), this protein is UPF0301 protein MCA2336 2.